The following is a 293-amino-acid chain: NAD kinase (293 aa).

D72 functions as the Proton acceptor in the catalytic mechanism. NAD(+)-binding positions include 72-73 (DG), 146-147 (ND), R157, K174, D176, 187-192 (TAYALS), and Q247.

The protein belongs to the NAD kinase family. A divalent metal cation is required as a cofactor.

The protein localises to the cytoplasm. The enzyme catalyses NAD(+) + ATP = ADP + NADP(+) + H(+). In terms of biological role, involved in the regulation of the intracellular balance of NAD and NADP, and is a key enzyme in the biosynthesis of NADP. Catalyzes specifically the phosphorylation on 2'-hydroxyl of the adenosine moiety of NAD to yield NADP. The sequence is that of NAD kinase from Marinomonas sp. (strain MWYL1).